The following is a 411-amino-acid chain: tRNA pseudouridine synthase Pus10 (411 aa).

The THUMP domain occupies 65-192 (ALAKCHLPTR…SGQVKVVRNP (128 aa)). Asp-244 acts as the Nucleophile in catalysis. Substrate-binding residues include Tyr-305 and Tyr-376.

The protein belongs to the pseudouridine synthase Pus10 family.

The catalysed reaction is uridine(54) in tRNA = pseudouridine(54) in tRNA. It carries out the reaction uridine(55) in tRNA = pseudouridine(55) in tRNA. Functionally, responsible for synthesis of pseudouridine from uracil-54 and uracil-55 in the psi GC loop of transfer RNAs. This Pyrobaculum arsenaticum (strain DSM 13514 / JCM 11321 / PZ6) protein is tRNA pseudouridine synthase Pus10.